Here is a 194-residue protein sequence, read N- to C-terminus: Large ribosomal subunit protein uL18 (194 aa).

It belongs to the universal ribosomal protein uL18 family. As to quaternary structure, part of the 50S ribosomal subunit. Contacts the 5S and 23S rRNAs.

Its function is as follows. This is one of the proteins that bind and probably mediate the attachment of the 5S RNA into the large ribosomal subunit, where it forms part of the central protuberance. The sequence is that of Large ribosomal subunit protein uL18 from Methanococcus aeolicus (strain ATCC BAA-1280 / DSM 17508 / OCM 812 / Nankai-3).